The primary structure comprises 127 residues: Glycine cleavage system H protein (127 aa).

In terms of domain architecture, Lipoyl-binding spans 24 to 105 (TALAGITDFA…YGEGWLVKIK (82 aa)). Lysine 65 is modified (N6-lipoyllysine).

This sequence belongs to the GcvH family. The glycine cleavage system is composed of four proteins: P, T, L and H. The cofactor is (R)-lipoate.

Its function is as follows. The glycine cleavage system catalyzes the degradation of glycine. The H protein shuttles the methylamine group of glycine from the P protein to the T protein. The sequence is that of Glycine cleavage system H protein from Chlorobium phaeobacteroides (strain DSM 266 / SMG 266 / 2430).